The following is a 262-amino-acid chain: tRNA pseudouridine synthase A (262 aa).

The Nucleophile role is filled by Asp-52. Tyr-103 is a substrate binding site.

The protein belongs to the tRNA pseudouridine synthase TruA family.

The catalysed reaction is uridine(38/39/40) in tRNA = pseudouridine(38/39/40) in tRNA. In terms of biological role, formation of pseudouridine at positions 38, 39 and 40 in the anticodon stem and loop of transfer RNAs. This Methanococcus maripaludis (strain DSM 14266 / JCM 13030 / NBRC 101832 / S2 / LL) protein is tRNA pseudouridine synthase A.